The sequence spans 372 residues: D-alanine--D-alanine ligase (372 aa).

In terms of domain architecture, ATP-grasp spans lysine 145–glutamate 349. Residue aspartate 176–glutamate 231 coordinates ATP. Mg(2+)-binding residues include aspartate 303, glutamate 316, and asparagine 318.

This sequence belongs to the D-alanine--D-alanine ligase family. Mg(2+) serves as cofactor. Mn(2+) is required as a cofactor.

Its subcellular location is the cytoplasm. The enzyme catalyses 2 D-alanine + ATP = D-alanyl-D-alanine + ADP + phosphate + H(+). It functions in the pathway cell wall biogenesis; peptidoglycan biosynthesis. Cell wall formation. In Coxiella burnetii (strain CbuK_Q154) (Coxiella burnetii (strain Q154)), this protein is D-alanine--D-alanine ligase.